We begin with the raw amino-acid sequence, 120 residues long: Histone H2B (120 aa).

Residues 1 to 26 are disordered; the sequence is MAEPAKKKPKKLPKKDKGQKDIKRKK. The residue at position 2 (alanine 2) is a Blocked amino end (Ala). N6-acetyllysine is present on residues lysine 7, lysine 10, and lysine 11. Lysine 115 participates in a covalent cross-link: Glycyl lysine isopeptide (Lys-Gly) (interchain with G-Cter in ubiquitin).

This sequence belongs to the histone H2B family. In terms of assembly, the nucleosome is a histone octamer containing two molecules each of H2A, H2B, H3 and H4 assembled in one H3-H4 heterotetramer and two H2A-H2B heterodimers. The octamer wraps approximately 147 bp of DNA. Can be acetylated to form H2BK6ac, H2BK33ac and H2BK34ac. Post-translationally, monoubiquitinated to form H2BK143ub1; may give a specific tag for epigenetic transcriptional activation.

The protein resides in the nucleus. The protein localises to the chromosome. Its function is as follows. Core component of nucleosome. Nucleosomes wrap and compact DNA into chromatin, limiting DNA accessibility to the cellular machineries which require DNA as a template. Histones thereby play a central role in transcription regulation, DNA repair, DNA replication and chromosomal stability. DNA accessibility is regulated via a complex set of post-translational modifications of histones, also called histone code, and nucleosome remodeling. This Pisum sativum (Garden pea) protein is Histone H2B.